The following is a 509-amino-acid chain: Proto-oncogene tyrosine-protein kinase LCK (509 aa).

The N-myristoyl glycine moiety is linked to residue Gly-2. Residues Gly-2–Tyr-72 are interactions with CD4 and CD8. S-palmitoyl cysteine attachment occurs at residues Cys-3 and Cys-5. Residues Leu-61 to Ser-121 form the SH3 domain. A Glycyl lysine isopeptide (Lys-Gly) (interchain with G-Cter in ubiquitin) cross-link involves residue Lys-99. Ser-102 is subject to Phosphoserine. The region spanning Trp-127–Cys-224 is the SH2 domain. An interaction with PTPRH region spans residues Arg-154–Arg-242. Thr-159 is subject to Phosphothreonine. Ser-162 bears the Phosphoserine mark. Phosphotyrosine is present on Tyr-192. A Phosphoserine modification is found at Ser-194. The region spanning Leu-245–Phe-498 is the Protein kinase domain. ATP is bound by residues Leu-251–Val-259 and Lys-273. Lys-276 is covalently cross-linked (Glycyl lysine isopeptide (Lys-Gly) (interchain with G-Cter in ubiquitin)). Catalysis depends on Asp-364, which acts as the Proton acceptor. Position 394 is a phosphotyrosine; by autocatalysis (Tyr-394). The residue at position 505 (Tyr-505) is a Phosphotyrosine.

Belongs to the protein kinase superfamily. Tyr protein kinase family. SRC subfamily. Binds to the cytoplasmic domain of cell surface receptors, such as AXL, CD2, CD4, CD5, CD8, CD44, CD45 and CD122. Also binds to effector molecules, such as PI4K, VAV1, RASA1, FYB1 and to other protein kinases including CDK1, RAF1, ZAP70 and SYK. Binds to phosphatidylinositol 3'-kinase (PI3K) from T-lymphocytes through its SH3 domain and to the tyrosine phosphorylated form of KHDRBS1/p70 through its SH2 domain. Interacts with SQSTM1. Interacts with phosphorylated LIME1. Interacts with CBLB and PTPRH. Interacts with RUNX3. Forms a signaling complex with EPHA1, PTK2B and PI3-KINASE; upon activation by EFNA1 which may regulate T-lymphocytes migration. Associates with ZAP70 and RHOH; these interactions allow LCK-mediated RHOH and CD3 subunit phosphorylations in presence of a functional ZAP70. Interacts with CEACAM1 (via cytoplasmic domain); mediates CEACAM1 phosphorylation resulting in PTPN6 recruitment that dephosphorylates TCR stimulation-induced CD247 and ZAP70. Interacts with FYB2. Interacts with CD160. Interacts with CD48. In terms of processing, autophosphorylated on Tyr-394, increasing enzymatic activity, this site is dephosphorylated by PTN22. Phosphorylated on Tyr-505 by CSK, decreasing activity. Dephosphorylated by PTPRC/CD45. Dephosphorylation at Tyr-394 by PTPN2 negatively regulates T-cells differentiation. Dephosphorylation at Tyr-394 by DUSP22 negatively regulates T-cell receptor signaling. Post-translationally, myristoylation is required prior to palmitoylation. Palmitoylation regulates association with the plasma membrane and could be mediated by ZDHHC2. In terms of processing, 'Lys-63'-linked ubiquitinated at Lys-99 and Lys-276 by UBR2; this modification is required for autophosphorylation at Tyr-394.

It is found in the cell membrane. It localises to the cytoplasm. The protein localises to the cytosol. The enzyme catalyses L-tyrosyl-[protein] + ATP = O-phospho-L-tyrosyl-[protein] + ADP + H(+). The relative activities of the inhibitory tyrosine-protein kinase CSK and the activating tyrosine-protein phosphatase PTPRC/CD45 determine the level of LCK activity. These interactions allow rapid and efficient activation of LCK in response to TCR stimulation. Functionally, non-receptor tyrosine-protein kinase that plays an essential role in the selection and maturation of developing T-cells in the thymus and in the function of mature T-cells. Plays a key role in T-cell antigen receptor (TCR)-linked signal transduction pathways. Constitutively associated with the cytoplasmic portions of the CD4 and CD8 surface receptors. Association of the TCR with a peptide antigen-bound MHC complex facilitates the interaction of CD4 and CD8 with MHC class II and class I molecules, respectively, thereby recruiting the associated LCK protein to the vicinity of the TCR/CD3 complex. LCK then phosphorylates tyrosine residues within the immunoreceptor tyrosine-based activation motifs (ITAM) of the cytoplasmic tails of the TCR-gamma chains and CD3 subunits, initiating the TCR/CD3 signaling pathway. Once stimulated, the TCR recruits the tyrosine kinase ZAP70, that becomes phosphorylated and activated by LCK. Following this, a large number of signaling molecules are recruited, ultimately leading to lymphokine production. LCK also contributes to signaling by other receptor molecules. Associates directly with the cytoplasmic tail of CD2, which leads to hyperphosphorylation and activation of LCK. Also plays a role in the IL2 receptor-linked signaling pathway that controls the T-cell proliferative response. Binding of IL2 to its receptor results in increased activity of LCK. Is expressed at all stages of thymocyte development and is required for the regulation of maturation events that are governed by both pre-TCR and mature alpha beta TCR. Phosphorylates other substrates including RUNX3, PTK2B/PYK2, the microtubule-associated protein MAPT, RHOH or TYROBP. Interacts with UNC119; this interaction plays a crucial role in activation of LCK. The protein is Proto-oncogene tyrosine-protein kinase LCK (Lck) of Rattus norvegicus (Rat).